A 320-amino-acid chain; its full sequence is Methylenetetrahydrofolate dehydrogenase [NAD(+)] (320 aa).

Residue Cys152 is part of the active site. NAD(+) contacts are provided by residues 187 to 188 (RS) and 210 to 211 (DI).

The protein belongs to the tetrahydrofolate dehydrogenase/cyclohydrolase family. Homodimer.

It localises to the cytoplasm. The protein resides in the nucleus. The catalysed reaction is (6R)-5,10-methylene-5,6,7,8-tetrahydrofolate + NAD(+) = (6R)-5,10-methenyltetrahydrofolate + NADH. It functions in the pathway one-carbon metabolism; tetrahydrofolate interconversion. Its function is as follows. Catalyzes oxidation of cytoplasmic one-carbon units for purine biosynthesis. The chain is Methylenetetrahydrofolate dehydrogenase [NAD(+)] (mtd1) from Schizosaccharomyces pombe (strain 972 / ATCC 24843) (Fission yeast).